The chain runs to 691 residues: Elongation factor G (691 aa).

The 276-residue stretch at 8–283 folds into the tr-type G domain; sequence EDYRNFGIMA…AVVDYLPTPI (276 aa). GTP-binding positions include 17–24, 81–85, and 135–138; these read AHIDAGKT, DTPGH, and NKMD.

Belongs to the TRAFAC class translation factor GTPase superfamily. Classic translation factor GTPase family. EF-G/EF-2 subfamily.

It is found in the cytoplasm. Functionally, catalyzes the GTP-dependent ribosomal translocation step during translation elongation. During this step, the ribosome changes from the pre-translocational (PRE) to the post-translocational (POST) state as the newly formed A-site-bound peptidyl-tRNA and P-site-bound deacylated tRNA move to the P and E sites, respectively. Catalyzes the coordinated movement of the two tRNA molecules, the mRNA and conformational changes in the ribosome. In Beijerinckia indica subsp. indica (strain ATCC 9039 / DSM 1715 / NCIMB 8712), this protein is Elongation factor G.